The sequence spans 272 residues: Proteasome subunit beta type-5 (272 aa).

Positions 1–55 (MKLDTSGLESTAPIFRRSDFVFDGLQMTPSFDLPNPTDFDGFQKEAVQMVKPAKG) are cleaved as a propeptide — removed in mature form. T56 functions as the Nucleophile in the catalytic mechanism.

This sequence belongs to the peptidase T1B family. The 26S proteasome consists of a 20S proteasome core and two 19S regulatory subunits. The 20S proteasome core is composed of 28 subunits that are arranged in four stacked rings, resulting in a barrel-shaped structure. The two end rings are each formed by seven alpha subunits, and the two central rings are each formed by seven beta subunits. The catalytic chamber with the active sites is on the inside of the barrel.

The protein resides in the cytoplasm. Its subcellular location is the nucleus. It catalyses the reaction Cleavage of peptide bonds with very broad specificity.. Functionally, the proteasome is a multicatalytic proteinase complex which is characterized by its ability to cleave peptides with Arg, Phe, Tyr, Leu, and Glu adjacent to the leaving group at neutral or slightly basic pH. The proteasome has an ATP-dependent proteolytic activity. In Spinacia oleracea (Spinach), this protein is Proteasome subunit beta type-5.